The chain runs to 357 residues: Cobalt-precorrin-5B C(1)-methyltransferase (357 aa).

It belongs to the CbiD family.

The catalysed reaction is Co-precorrin-5B + S-adenosyl-L-methionine = Co-precorrin-6A + S-adenosyl-L-homocysteine. It functions in the pathway cofactor biosynthesis; adenosylcobalamin biosynthesis; cob(II)yrinate a,c-diamide from sirohydrochlorin (anaerobic route): step 6/10. In terms of biological role, catalyzes the methylation of C-1 in cobalt-precorrin-5B to form cobalt-precorrin-6A. The sequence is that of Cobalt-precorrin-5B C(1)-methyltransferase from Paramagnetospirillum magneticum (strain ATCC 700264 / AMB-1) (Magnetospirillum magneticum).